The following is a 312-amino-acid chain: Olfactory receptor 4L1 (312 aa).

At 1–25 (MDLKNGSLVTEFILLGFFGRWELQI) the chain is on the extracellular side. The N-linked (GlcNAc...) asparagine glycan is linked to N5. Residues 26 to 49 (FFFVTFSLIYGATVMGNILIMVTV) traverse the membrane as a helical segment. The Cytoplasmic segment spans residues 50–57 (TCRSTLHS). The helical transmembrane segment at 58–79 (PLYFLLGNLSFLDMCLSTATTP) threads the bilayer. Residues 80–100 (KMIIDLLTDHKTISVWGCVTQ) lie on the Extracellular side of the membrane. Cysteines 97 and 189 form a disulfide. Residues 101–120 (MFFMHFFGGAEMTLLIIMAF) traverse the membrane as a helical segment. Topologically, residues 121–139 (DRYVAICKPLHYRTIMSHK) are cytoplasmic. Residues 140–158 (LLKGFAILSWIIGFLHSIS) form a helical membrane-spanning segment. At 159–195 (QIVLTMNLPFCGHNVINNIFCDLPLVIKLACIETYTL) the chain is on the extracellular side. A helical membrane pass occupies residues 196 to 219 (ELFVIADSGLLSFTCFILLLVSYI). The Cytoplasmic segment spans residues 220 to 235 (VILVSVPKKSSHGLSK). Residues 236-258 (ALSTLSAHIIVVTLFFGPCIFIY) traverse the membrane as a helical segment. Over 259 to 269 (VWPFSSLASNK) the chain is Extracellular. N-linked (GlcNAc...) asparagine glycosylation occurs at N268. The chain crosses the membrane as a helical span at residues 270 to 289 (TLAVFYTVITPLLNPSIYTL). Over 290–312 (RNKKMQEAIRKLRFQYVSSAQNF) the chain is Cytoplasmic.

The protein belongs to the G-protein coupled receptor 1 family.

The protein resides in the cell membrane. Functionally, odorant receptor. In Homo sapiens (Human), this protein is Olfactory receptor 4L1 (OR4L1).